The chain runs to 101 residues: MTALFCLELRTNIFLIMNDCIIINYWKGFIFSFHSYFFPFRFESSLRAHYPGKRNYSDFSVIPLPYYIDVRSFHICESQHIIALPLQIPLPYRMLIRMYPV.

Its subcellular location is the cytoplasm. This is an uncharacterized protein from Saccharomyces cerevisiae (strain ATCC 204508 / S288c) (Baker's yeast).